The primary structure comprises 395 residues: MGIKHLFQVIQENAPDAIKAGDIKNHFGRKVAIDASMSIYSFLIAVRSEGQQLMSESGETTSHLMGMFYRTLRMVDNGIKPLYVFDGAPPKLKSGELAKRTARKAEATEAHEEAKETGTAEDVEKFSRRTVRVTREHNAECKKLLKLMGIPYIDAPTEAEAQCAVLARAGKVYAAASEDMDTLCFEAPILLRHLTFSEQRKEPIQEIHLNRTLEGLGMDRKQFIDLCILLGCDYLEPIPKVGPNTALKLIREHGSLEKVVEAIENDPKKKYVIPEDWPYQDARELFLHPDVREADHPECDFKWEAPDVEALVEFLVKDKGFNEDRVRNGAARLQKNLKTAQQSRLEGFFKPVARTDEEKASLKRKHDEKLQEQKKRKKEEAKAKKEAKAKPRGAA.

The interval 1–104 (MGIKHLFQVI…GELAKRTARK (104 aa)) is N-domain. Aspartate 34 lines the Mg(2+) pocket. Positions 47 and 70 each coordinate DNA. Aspartate 86 is a Mg(2+) binding site. The tract at residues 102 to 121 (ARKAEATEAHEEAKETGTAE) is disordered. The tract at residues 122 to 253 (DVEKFSRRTV…NTALKLIREH (132 aa)) is I-domain. Glutamate 158, glutamate 160, aspartate 179, and aspartate 181 together coordinate Mg(2+). Position 158 (glutamate 158) interacts with DNA. 2 residues coordinate DNA: glycine 231 and aspartate 233. Position 233 (aspartate 233) interacts with Mg(2+). Positions 341–349 (QQSRLEGFF) are interaction with PCNA. A disordered region spans residues 348–395 (FFKPVARTDEEKASLKRKHDEKLQEQKKRKKEEAKAKKEAKAKPRGAA). The segment covering 353 to 389 (ARTDEEKASLKRKHDEKLQEQKKRKKEEAKAKKEAKA) has biased composition (basic and acidic residues).

The protein belongs to the XPG/RAD2 endonuclease family. FEN1 subfamily. As to quaternary structure, interacts with PCNA. Three molecules of fen1 bind to one PCNA trimer with each molecule binding to one PCNA monomer. PCNA stimulates the nuclease activity without altering cleavage specificity. Mg(2+) is required as a cofactor. In terms of processing, phosphorylated. Phosphorylation upon DNA damage induces relocalization to the nuclear plasma.

The protein localises to the nucleus. Its subcellular location is the nucleolus. It localises to the nucleoplasm. The protein resides in the mitochondrion. Its function is as follows. Structure-specific nuclease with 5'-flap endonuclease and 5'-3' exonuclease activities involved in DNA replication and repair. During DNA replication, cleaves the 5'-overhanging flap structure that is generated by displacement synthesis when DNA polymerase encounters the 5'-end of a downstream Okazaki fragment. It enters the flap from the 5'-end and then tracks to cleave the flap base, leaving a nick for ligation. Also involved in the long patch base excision repair (LP-BER) pathway, by cleaving within the apurinic/apyrimidinic (AP) site-terminated flap. Acts as a genome stabilization factor that prevents flaps from equilibrating into structures that lead to duplications and deletions. Also possesses 5'-3' exonuclease activity on nicked or gapped double-stranded DNA, and exhibits RNase H activity. Also involved in replication and repair of rDNA and in repairing mitochondrial DNA. The sequence is that of Flap endonuclease 1 (fen1) from Neosartorya fischeri (strain ATCC 1020 / DSM 3700 / CBS 544.65 / FGSC A1164 / JCM 1740 / NRRL 181 / WB 181) (Aspergillus fischerianus).